Consider the following 269-residue polypeptide: Formamidopyrimidine-DNA glycosylase (269 aa).

Pro-2 acts as the Schiff-base intermediate with DNA in catalysis. The Proton donor role is filled by Glu-3. Lys-58 (proton donor; for beta-elimination activity) is an active-site residue. Residues His-91, Arg-110, and Lys-150 each contribute to the DNA site. The FPG-type zinc-finger motif lies at 235-269 (SVYGCENKTCHFCKSKIIKIVQNQRSTFYCRKCQT). Arg-259 acts as the Proton donor; for delta-elimination activity in catalysis.

The protein belongs to the FPG family. Monomer. It depends on Zn(2+) as a cofactor.

It catalyses the reaction Hydrolysis of DNA containing ring-opened 7-methylguanine residues, releasing 2,6-diamino-4-hydroxy-5-(N-methyl)formamidopyrimidine.. The enzyme catalyses 2'-deoxyribonucleotide-(2'-deoxyribose 5'-phosphate)-2'-deoxyribonucleotide-DNA = a 3'-end 2'-deoxyribonucleotide-(2,3-dehydro-2,3-deoxyribose 5'-phosphate)-DNA + a 5'-end 5'-phospho-2'-deoxyribonucleoside-DNA + H(+). Its function is as follows. Involved in base excision repair of DNA damaged by oxidation or by mutagenic agents. Acts as a DNA glycosylase that recognizes and removes damaged bases. Has a preference for oxidized purines, such as 7,8-dihydro-8-oxoguanine (8-oxoG). Has AP (apurinic/apyrimidinic) lyase activity and introduces nicks in the DNA strand. Cleaves the DNA backbone by beta-delta elimination to generate a single-strand break at the site of the removed base with both 3'- and 5'-phosphates. The protein is Formamidopyrimidine-DNA glycosylase of Ruthia magnifica subsp. Calyptogena magnifica.